The primary structure comprises 83 residues: Bublin coiled-coil protein (83 aa).

Residues 1–25 (MSGPNGDLGMPVDAGTEGENDSFGE) form a disordered region. A coiled-coil region spans residues 25–74 (EAEYAAINSMLDQINSCLDHLEEKNDHLHARLQELLESNRQTRLEFQQQL). Position 82 is a phosphoserine (Ser82).

The protein belongs to the UPF0184 (EST00098) family.

It localises to the cell junction. Its subcellular location is the cytoplasm. It is found in the cytoskeleton. In terms of biological role, essential for intermediate filament organization in intestinal cells, interacts with intermediate filament and regulates intestinal lumen morphology. In Mus musculus (Mouse), this protein is Bublin coiled-coil protein.